The chain runs to 273 residues: Thiazole synthase (273 aa).

K111 functions as the Schiff-base intermediate with DXP in the catalytic mechanism. Residues G172, 198–199 (AG), and 220–221 (NS) each bind 1-deoxy-D-xylulose 5-phosphate. Positions 251-273 (RLPRRGQASASSPTTGLISGKDK) are disordered. Residues 258–267 (ASASSPTTGL) show a composition bias toward polar residues.

The protein belongs to the ThiG family. As to quaternary structure, homotetramer. Forms heterodimers with either ThiH or ThiS.

The protein resides in the cytoplasm. It carries out the reaction [ThiS sulfur-carrier protein]-C-terminal-Gly-aminoethanethioate + 2-iminoacetate + 1-deoxy-D-xylulose 5-phosphate = [ThiS sulfur-carrier protein]-C-terminal Gly-Gly + 2-[(2R,5Z)-2-carboxy-4-methylthiazol-5(2H)-ylidene]ethyl phosphate + 2 H2O + H(+). The protein operates within cofactor biosynthesis; thiamine diphosphate biosynthesis. Catalyzes the rearrangement of 1-deoxy-D-xylulose 5-phosphate (DXP) to produce the thiazole phosphate moiety of thiamine. Sulfur is provided by the thiocarboxylate moiety of the carrier protein ThiS. In vitro, sulfur can be provided by H(2)S. The polypeptide is Thiazole synthase (Synechococcus sp. (strain CC9902)).